The following is a 206-amino-acid chain: Large ribosomal subunit protein uL4 (206 aa).

It belongs to the universal ribosomal protein uL4 family. In terms of assembly, part of the 50S ribosomal subunit.

Functionally, one of the primary rRNA binding proteins, this protein initially binds near the 5'-end of the 23S rRNA. It is important during the early stages of 50S assembly. It makes multiple contacts with different domains of the 23S rRNA in the assembled 50S subunit and ribosome. Its function is as follows. Forms part of the polypeptide exit tunnel. This Paracoccus denitrificans (strain Pd 1222) protein is Large ribosomal subunit protein uL4.